We begin with the raw amino-acid sequence, 1042 residues long: SWI/SNF-related matrix-associated actin-dependent regulator of chromatin subfamily A member 1 (1042 aa).

Residues 25–82 (EDEQPGPSTSQEEGAAAAATEATAATEKGEKKKEKNVSSFQLKLAAKAPKSEKEMDPE) form a disordered region. Residues 36–50 (EEGAAAAATEATAAT) show a composition bias toward low complexity. Basic and acidic residues-rich tracts occupy residues 51 to 60 (EKGEKKKEKN) and 73 to 82 (PKSEKEMDPE). Residues Ser116 and Ser119 each carry the phosphoserine modification. Residues 195–360 (ISLYENGVNG…WALLNFLLPD (166 aa)) form the Helicase ATP-binding domain. 208-215 (DEMGLGKT) is a binding site for ATP. The short motif at 311–314 (DEAH) is the DEAH box element. Positions 490-641 (VLDKLLAKLK…SIVIQQGRLI (152 aa)) constitute a Helicase C-terminal domain. Glycyl lysine isopeptide (Lys-Gly) (interchain with G-Cter in SUMO2) cross-links involve residues Lys650, Lys716, and Lys738. The disordered stretch occupies residues 819–849 (EQKKIDGAEPLTPEETEEKEKLLTQGFTNWT). Positions 828–837 (PLTPEETEEK) are enriched in basic and acidic residues. The SANT 1 domain maps to 843 to 895 (QGFTNWTKRDFNQFIKANEKYGRDDIDNIAREVEGKSPEEVMEYSAVFWERCN). Tyr942 is modified (phosphotyrosine). The SANT 2 domain occupies 946-1010 (KGKNYTEEED…QRRCNTLISL (65 aa)).

The protein belongs to the SNF2/RAD54 helicase family. ISWI subfamily. May form homodimers. Component of the ACF-1 ISWI chromatin remodeling complex at least composed of SMARCA1 and BAZ1A, which regulates the spacing of histone octamers on the DNA template to facilitate access to DNA. Within the complex interacts with BAZ1A; the interaction is direct. Component of the WICH-1 ISWI chromatin remodeling complex at least composed of SMARCA1 and BAZ1B/WSTF. Within the complex interacts with BAZ1B/WSTF. Component of the NoRC-1 ISWI chromatin remodeling complex at least composed of SMARCA1 and BAZ2A/TIP5. Within the complex interacts with BAZ2A/TIP5. Component of the BRF-1 ISWI chromatin remodeling complex at least composed of SMARCA1 and BAZ2B. Within the complex interacts with BAZ2B. Component of the NURF-1 ISWI chromatin remodeling complex (also called the nucleosome-remodeling factor (NURF) complex) at least composed of SMARCA1, BPTF, RBBP4 and RBBP7. Within the complex interacts with BPTF. Within the complex interacts with RBBP4 and RBBP7. Component of the CERF-1 ISWI chromatin remodeling complex (also called the CECR2-containing-remodeling factor (CERF) complex) at least composed of CECR2 and SMARCA1. LUZP1 is detected as part of the CERF-1 complex in embryonic stem cells where it is involved in complex stabilization but is not detected in the complex in the testis. Component of the RSF-1 ISWI chromatin remodeling complex at least composed of SMARCA1 and RSF1. Within the complex interacts with RSF1. Interacts with PRLR. Interacts with ERCC6. As to quaternary structure, may form homodimers. Component of the BPFT-SMARCA1 complex at least composed of SMARCA1, BPFT, RBBP4 and RBBP7; the complex is catalytically inactive and does not remodel chromatin. Within the complex interacts with BPTF, RBBP4 and RBBP7. Component of the BAZ1A-1-SMARCA1 complex at least composed of SMARCA1 and BAZ1A; the complex is catalytically inactive and does not remodel chromatin. Component of the BAZ1B-1-SMARCA1 complex at least composed of SMARCA1 and BAZ1B; the complex is catalytically inactive and does not remodel chromatin. Expressed in lung, breast, kidney, ovary, skeletal muscle and brain. In terms of tissue distribution, mainly expressed in non-neuronal tissues such as lung, breast, kidney, and ovary.

It localises to the nucleus. The protein resides in the chromosome. It carries out the reaction ATP + H2O = ADP + phosphate + H(+). ATPase that possesses intrinsic ATP-dependent chromatin-remodeling activity. ATPase activity is substrate-dependent, and is increased when nucleosomes are the substrate, but is also catalytically active when DNA alone is the substrate. Catalytic subunit of ISWI chromatin-remodeling complexes, which form ordered nucleosome arrays on chromatin and facilitate access to DNA during DNA-templated processes such as DNA replication, transcription, and repair. Within the ISWI chromatin-remodeling complexes, slides edge- and center-positioned histone octamers away from their original location on the DNA template. Catalytic activity and histone octamer sliding propensity is regulated and determined by components of the ISWI chromatin-remodeling complexes. The BAZ1A-, BAZ1B-, BAZ2A- and BAZ2B-containing ISWI chromatin-remodeling complexes regulate the spacing of nucleosomes along the chromatin and have the ability to slide mononucleosomes to the center of a DNA template. The CECR2- and RSF1-containing ISWI chromatin-remodeling complexes do not have the ability to slide mononucleosomes to the center of a DNA template. Within the NURF-1 and CERF-1 ISWI chromatin remodeling complexes, nucleosomes are the preferred substrate for its ATPase activity. Within the NURF-1 ISWI chromatin-remodeling complex, binds to the promoters of En1 and En2 to positively regulate their expression and promote brain development. May promote neurite outgrowth. May be involved in the development of luteal cells. Facilitates nucleosome assembly during DNA replication, ensuring replication fork progression and genomic stability by preventing replication stress and nascent DNA gaps. Functionally, catalytically inactive when either DNA or nucleosomes are the substrate and does not possess chromatin-remodeling activity. Acts as a negative regulator of chromatin remodelers by generating inactive complexes. This Homo sapiens (Human) protein is SWI/SNF-related matrix-associated actin-dependent regulator of chromatin subfamily A member 1.